Reading from the N-terminus, the 118-residue chain is Vacuolar ATPase assembly integral membrane protein vma-21 (118 aa).

At 1 to 35 (MATRRIISQEKTLLEKDDRIGSSPAASEKSNITPA) the chain is on the cytoplasmic side. The chain crosses the membrane as a helical span at residues 36–56 (VPASVIIKLLAFTFAMIVIPI). Over 57–73 (SSYFLTVDRLFKGNSTY) the chain is Lumenal. The helical transmembrane segment at 74-94 (AGATAAIMANVVLIGYIIVAM) threads the bilayer. Residues 95–118 (AEDQSDQENEKKGGGGKGEGKKDL) lie on the Cytoplasmic side of the membrane. The disordered stretch occupies residues 98–118 (QSDQENEKKGGGGKGEGKKDL). The span at 102-118 (ENEKKGGGGKGEGKKDL) shows a compositional bias: basic and acidic residues. Positions 115-118 (KKDL) match the Prevents secretion from ER motif.

Belongs to the VMA21 family.

Its subcellular location is the endoplasmic reticulum membrane. It localises to the endoplasmic reticulum-Golgi intermediate compartment membrane. It is found in the cytoplasmic vesicle. The protein localises to the COPII-coated vesicle membrane. Required for the assembly of the V0 complex of the vacuolar ATPase (V-ATPase) in the endoplasmic reticulum. The protein is Vacuolar ATPase assembly integral membrane protein vma-21 (vma-21) of Neurospora crassa (strain ATCC 24698 / 74-OR23-1A / CBS 708.71 / DSM 1257 / FGSC 987).